A 262-amino-acid polypeptide reads, in one-letter code: tRNA pseudouridine synthase A (262 aa).

Aspartate 55 functions as the Nucleophile in the catalytic mechanism. Residue tyrosine 116 participates in substrate binding.

Belongs to the tRNA pseudouridine synthase TruA family. As to quaternary structure, homodimer.

It carries out the reaction uridine(38/39/40) in tRNA = pseudouridine(38/39/40) in tRNA. Functionally, formation of pseudouridine at positions 38, 39 and 40 in the anticodon stem and loop of transfer RNAs. The chain is tRNA pseudouridine synthase A from Bdellovibrio bacteriovorus (strain ATCC 15356 / DSM 50701 / NCIMB 9529 / HD100).